A 366-amino-acid chain; its full sequence is MKFTIQNDILVENLKKITRLLIKNVSFPILENILIQIENGILSLTTTNLEIELVSKIKIITKYTPGKITISGRKILNICRNLSEKSEVKMPLKEKKMYVSCENSNYILSTLSADDFPNHQNFNHISNFHISSNILKEMIEKTEFSMGKQDVRYYLNGMLLEKKDNFLRSVATDGYRLAISYSKLEKDINFFSIIIPSKAVMELSRLLNTQVQLLNILIGTNSIRIYIKDLIFTTQLIEGEYPDYESVLFKEKKNPIIANCTLLKKSLLRAAILAHEKFCGIEIKIEKNKFKVLSDNQEEETAEDLFDINYLGDTIEISINVYYLLDVINNIKSENIILFLNKSKSSIQIEAENNSLNAYIIMLLKR.

This sequence belongs to the beta sliding clamp family. As to quaternary structure, forms a ring-shaped head-to-tail homodimer around DNA which binds and tethers DNA polymerases and other proteins to the DNA. The DNA replisome complex has a single clamp-loading complex (3 tau and 1 each of delta, delta', psi and chi subunits) which binds 3 Pol III cores (1 core on the leading strand and 2 on the lagging strand) each with a beta sliding clamp dimer. Additional proteins in the replisome are other copies of gamma, psi and chi, Ssb, DNA helicase and RNA primase.

It localises to the cytoplasm. Functionally, confers DNA tethering and processivity to DNA polymerases and other proteins. Acts as a clamp, forming a ring around DNA (a reaction catalyzed by the clamp-loading complex) which diffuses in an ATP-independent manner freely and bidirectionally along dsDNA. Initially characterized for its ability to contact the catalytic subunit of DNA polymerase III (Pol III), a complex, multichain enzyme responsible for most of the replicative synthesis in bacteria; Pol III exhibits 3'-5' exonuclease proofreading activity. The beta chain is required for initiation of replication as well as for processivity of DNA replication. The sequence is that of Beta sliding clamp (dnaN) from Buchnera aphidicola subsp. Rhopalosiphum padi.